The following is a 197-amino-acid chain: Imidazoleglycerol-phosphate dehydratase (197 aa).

The protein belongs to the imidazoleglycerol-phosphate dehydratase family.

The protein resides in the cytoplasm. The catalysed reaction is D-erythro-1-(imidazol-4-yl)glycerol 3-phosphate = 3-(imidazol-4-yl)-2-oxopropyl phosphate + H2O. It functions in the pathway amino-acid biosynthesis; L-histidine biosynthesis; L-histidine from 5-phospho-alpha-D-ribose 1-diphosphate: step 6/9. In Bradyrhizobium sp. (strain ORS 278), this protein is Imidazoleglycerol-phosphate dehydratase.